A 447-amino-acid chain; its full sequence is UDP-N-acetylmuramoylalanine--D-glutamate ligase (447 aa).

112-118 is an ATP binding site; sequence GTNGKST.

This sequence belongs to the MurCDEF family.

The protein resides in the cytoplasm. It catalyses the reaction UDP-N-acetyl-alpha-D-muramoyl-L-alanine + D-glutamate + ATP = UDP-N-acetyl-alpha-D-muramoyl-L-alanyl-D-glutamate + ADP + phosphate + H(+). Its pathway is cell wall biogenesis; peptidoglycan biosynthesis. Its function is as follows. Cell wall formation. Catalyzes the addition of glutamate to the nucleotide precursor UDP-N-acetylmuramoyl-L-alanine (UMA). This Legionella pneumophila (strain Lens) protein is UDP-N-acetylmuramoylalanine--D-glutamate ligase.